We begin with the raw amino-acid sequence, 445 residues long: Phenylacetate-coenzyme A ligase (445 aa).

Belongs to the phenylacetyl-CoA ligase family. Monomer.

It carries out the reaction 2-phenylacetate + ATP + CoA = phenylacetyl-CoA + AMP + diphosphate. It functions in the pathway aromatic compound metabolism; phenylacetate degradation. Functionally, catalyzes the activation of phenylacetic acid (PA) to phenylacetyl-CoA (PA-CoA). Involved in the phenylalanine metabolism. This Thermus thermophilus (strain ATCC BAA-163 / DSM 7039 / HB27) protein is Phenylacetate-coenzyme A ligase.